Reading from the N-terminus, the 446-residue chain is Maltoporin (446 aa).

The N-terminal stretch at 1-25 (MMITLRKLPLAVAVAAGVMSAQAMA) is a signal peptide.

Belongs to the porin LamB (TC 1.B.3) family. Homotrimer formed of three 18-stranded antiparallel beta-barrels, containing three independent channels.

It is found in the cell outer membrane. It catalyses the reaction beta-maltose(in) = beta-maltose(out). Its function is as follows. Involved in the transport of maltose and maltodextrins. This Escherichia coli (strain K12 / MC4100 / BW2952) protein is Maltoporin.